Consider the following 429-residue polypeptide: Adenylosuccinate synthetase (429 aa).

Residues 13-19 (GDEGKGK) and 41-43 (GHT) each bind GTP. The active-site Proton acceptor is the aspartate 14. Mg(2+)-binding residues include aspartate 14 and glycine 41. IMP-binding positions include 14–17 (DEGK), 39–42 (NAGH), threonine 130, arginine 144, glutamine 224, threonine 239, and arginine 303. Residue histidine 42 is the Proton donor of the active site. Residue 299 to 305 (ATTGRAR) coordinates substrate. GTP is bound by residues arginine 305, 331–333 (KLD), and 412–414 (STG).

Belongs to the adenylosuccinate synthetase family. In terms of assembly, homodimer. The cofactor is Mg(2+).

It is found in the cytoplasm. The enzyme catalyses IMP + L-aspartate + GTP = N(6)-(1,2-dicarboxyethyl)-AMP + GDP + phosphate + 2 H(+). The protein operates within purine metabolism; AMP biosynthesis via de novo pathway; AMP from IMP: step 1/2. Its function is as follows. Plays an important role in the de novo pathway of purine nucleotide biosynthesis. Catalyzes the first committed step in the biosynthesis of AMP from IMP. The chain is Adenylosuccinate synthetase from Psychrobacter cryohalolentis (strain ATCC BAA-1226 / DSM 17306 / VKM B-2378 / K5).